An 805-amino-acid chain; its full sequence is MTFRVIIVGGGVAGLTLASAFEKAGIDYILLECRPAFDVAVGASIALSPNGARILDQLGAWEKWLKIAQPLVRWGDRNSKGELIMPRSASTPLAKALTGYDMTFGLRRSLLQTLYDNIEDKSMLLPKKSVINVTCSQEGVAVQCADGCSYEGDILVGADGTYSKVREYMWRLADRDEPGLMDPDKKAMTAEYQCLFGISKASGSIAIGDADFIYDHDRSSFIFSDNCGRICYFILQKMDRVYEMVEIPRFSQANAQAYAQRHADIQIRPDLTFGNLYEHSESSILVALEEAKFKQWSWGRIVCVGDSIHKMTPNLGAGASASIESAAALLNSIKAMFDHSPEEGPTETQIRECFAQYQKSREVRATAIVDASSMTTRLQALRGWFEFLFVRLGMPIMGSFAADMASEIWVGATMLENLAPPKASLRGTLPFNPTQGQGQRESKLKRALLGLPFLALLLVAKTATDAKYASALRGYIWESGGMTSAMGSVPLLQRFYSMKGVGDLWSLRYINYLPDFYETNYESLSQAVSSSIDVGIVMSIWSFESIRRANALTMAQIPTLFTFYGQMAGLGRVSPLYYILYYINSPIEVFKGADMRLMHLNYAIAVLPAIIVSYYIPLSAAFFWPTVSGRKSWLFVWQMHPIWTAITLYLFSRIFPSTVKEDRVHGLRRDLPVIKFSMTVLVIGAAGFWMWSRWTSPSSVARVFFPTAVPSTQAPFAACVCAILKWDMLSTFGSTFLWLGYLIWDLKYAGMMQATWVRVAIYGVAAFVALGPGAAIGLGWLWRENILAHKRHKDAVTEENLAQTR.

Residues 1-20 (MTFRVIIVGGGVAGLTLASA) form the signal peptide. The FAD site is built by Glu32, Ala46, and Arg107. A glycan (N-linked (GlcNAc...) asparagine) is linked at Asn132. Tyr214 is an active-site residue. Residues Asp306 and Ala319 each coordinate FAD. 7 helical membrane-spanning segments follow: residues 551–571 (ALTMAQIPTLFTFYGQMAGLG), 604–624 (IAVLPAIIVSYYIPLSAAFFW), 632–652 (SWLFVWQMHPIWTAITLYLFS), 671–691 (LPVIKFSMTVLVIGAAGFWMW), 703–723 (VFFPTAVPSTQAPFAACVCAI), 726–746 (WDMLSTFGSTFLWLGYLIWDL), and 761–781 (IYGVAAFVALGPGAAIGLGWL).

It belongs to the paxM FAD-dependent monooxygenase family.

Its subcellular location is the membrane. It functions in the pathway secondary metabolite biosynthesis; terpenoid biosynthesis. The protein operates within mycotoxin biosynthesis. In terms of biological role, FAD-dependent monooxygenase; part of the gene cluster that mediates the biosynthesis of the neurotoxin verrucosidin, a methylated alpha-pyrone polyketide that inhibits oxidative phosphorylation in mitochondria and thereby causes neurological diseases. The carbon backbone of verrucosidin is synthesized by the HR-PKS verA, and further modified by the other verrucodidin cluster enzymes. This is FAD-dependent monooxygenase verC1 from Penicillium polonicum.